The chain runs to 101 residues: uncharacterized protein (101 aa).

A run of 3 helical transmembrane segments spans residues 20-40 (KHFILITACPLFVLGLLLLGL), 59-79 (GVIAAKLLVAWYLATIVMYIA), and 81-101 (SEMWKYAFAVSLLLNSLALFF).

It is found in the endoplasmic reticulum. Its subcellular location is the membrane. This is an uncharacterized protein from Saccharomyces cerevisiae (strain ATCC 204508 / S288c) (Baker's yeast).